The chain runs to 368 residues: MKTLNSTPRADGFHMPAEWAPQTQVWMVWPERPDNWRLGGKPAQAAHVTLAKAIARFEPVTVAASAGQYENARRQLDQPNIRVVEISNDDAWVRDTGPTFVINGHGEVRGVDWGFNAWGGFDGGLYAPWNRDEELAAKVLEMERCQRYQTEGFVLEGGSIHVDGEGTVITTEECLLNRNRNPHLSREQIEAVLRDHLAVDTVVWLPDGLYNDETDGHVDNFCCYVRPGEVLLAWTDDSNDPNYARCHAAMDVLKNTRDAKGREFIVHKMPIPGPLYATAEECAGVDQVAGSQERDPSVRLAGSYVNFLIVNGGIIAPSFDDPADAEARAILARIFPDHEVVMIPGRELLLGGGNIHCLTQQQPAPVKR.

The active-site Amidino-cysteine intermediate is the Cys357.

The protein belongs to the agmatine deiminase family. As to quaternary structure, homodimer.

The catalysed reaction is agmatine + H2O = N-carbamoylputrescine + NH4(+). The protein operates within amine and polyamine biosynthesis; putrescine biosynthesis via agmatine pathway; N-carbamoylputrescine from agmatine: step 1/1. In terms of biological role, mediates the hydrolysis of agmatine into N-carbamoylputrescine in the arginine decarboxylase (ADC) pathway of putrescine biosynthesis, a basic polyamine. The polypeptide is Agmatine deiminase (Pseudomonas putida (strain ATCC 700007 / DSM 6899 / JCM 31910 / BCRC 17059 / LMG 24140 / F1)).